The following is a 224-amino-acid chain: Small ribosomal subunit protein eS1 (224 aa).

Belongs to the eukaryotic ribosomal protein eS1 family.

The sequence is that of Small ribosomal subunit protein eS1 from Methanococcus maripaludis (strain C7 / ATCC BAA-1331).